Here is a 317-residue protein sequence, read N- to C-terminus: L-lactate dehydrogenase (317 aa).

NAD(+) is bound by residues valine 17, aspartate 38, lysine 43, tyrosine 69, and 83–84 (GA). Positions 86 and 92 each coordinate substrate. NAD(+) is bound by residues serine 105, 122–124 (ATN), and serine 147. 124–127 (NPVD) lines the substrate pocket. 152-155 (DTAR) provides a ligand contact to substrate. Arginine 157 and histidine 172 together coordinate beta-D-fructose 1,6-bisphosphate. The Proton acceptor role is filled by histidine 179. Tyrosine 224 bears the Phosphotyrosine mark. Position 233 (threonine 233) interacts with substrate.

Belongs to the LDH/MDH superfamily. LDH family. As to quaternary structure, homotetramer.

Its subcellular location is the cytoplasm. It carries out the reaction (S)-lactate + NAD(+) = pyruvate + NADH + H(+). It participates in fermentation; pyruvate fermentation to lactate; (S)-lactate from pyruvate: step 1/1. With respect to regulation, allosterically activated by fructose 1,6-bisphosphate (FBP). Its function is as follows. Catalyzes the conversion of lactate to pyruvate. The chain is L-lactate dehydrogenase from Geobacillus kaustophilus (strain HTA426).